The primary structure comprises 283 residues: Bifunctional protein FolD (283 aa).

NADP(+) is bound by residues 164–166 (GRS), Ser-189, and Ile-230.

The protein belongs to the tetrahydrofolate dehydrogenase/cyclohydrolase family. Homodimer.

The catalysed reaction is (6R)-5,10-methylene-5,6,7,8-tetrahydrofolate + NADP(+) = (6R)-5,10-methenyltetrahydrofolate + NADPH. The enzyme catalyses (6R)-5,10-methenyltetrahydrofolate + H2O = (6R)-10-formyltetrahydrofolate + H(+). Its pathway is one-carbon metabolism; tetrahydrofolate interconversion. In terms of biological role, catalyzes the oxidation of 5,10-methylenetetrahydrofolate to 5,10-methenyltetrahydrofolate and then the hydrolysis of 5,10-methenyltetrahydrofolate to 10-formyltetrahydrofolate. This is Bifunctional protein FolD from Lactobacillus delbrueckii subsp. bulgaricus (strain ATCC BAA-365 / Lb-18).